The following is a 155-amino-acid chain: Endoribonuclease YbeY (155 aa).

Zn(2+) contacts are provided by H114, H118, and H124.

The protein belongs to the endoribonuclease YbeY family. The cofactor is Zn(2+).

The protein localises to the cytoplasm. Single strand-specific metallo-endoribonuclease involved in late-stage 70S ribosome quality control and in maturation of the 3' terminus of the 16S rRNA. This is Endoribonuclease YbeY from Citrobacter koseri (strain ATCC BAA-895 / CDC 4225-83 / SGSC4696).